A 520-amino-acid chain; its full sequence is Bifunctional dihydrofolate reductase-thymidylate synthase (520 aa).

The region spanning 26–229 is the DHFR domain; sequence AFSIVVALDK…LEFEICKYVP (204 aa). V30 contributes to the substrate binding site. Residues A32 and 38-44 contribute to the NADP(+) site; that span reads GIGDGES. D52 is a binding site for substrate. Residues 81 to 83, 102 to 105, and 157 to 164 each bind NADP(+); these read RKT, LSSK, and GGAQVYAD. Positions 162 and 180 each coordinate substrate. A thymidylate synthase region spans residues 234–520; sequence ERQYLELIDR…HPPIKMEMAV (287 aa). R254 is a binding site for dUMP. C400 is an active-site residue. Residues H401, 421–425, N433, and 463–465 contribute to the dUMP site; these read QRSCD and HVY.

The protein in the N-terminal section; belongs to the dihydrofolate reductase family. This sequence in the C-terminal section; belongs to the thymidylate synthase family.

It catalyses the reaction (6S)-5,6,7,8-tetrahydrofolate + NADP(+) = 7,8-dihydrofolate + NADPH + H(+). The catalysed reaction is dUMP + (6R)-5,10-methylene-5,6,7,8-tetrahydrofolate = 7,8-dihydrofolate + dTMP. It functions in the pathway cofactor biosynthesis; tetrahydrofolate biosynthesis; 5,6,7,8-tetrahydrofolate from 7,8-dihydrofolate: step 1/1. In terms of biological role, bifunctional enzyme. Involved in de novo dTMP biosynthesis. Key enzyme in folate metabolism. Catalyzes an essential reaction for de novo glycine and purine synthesis, DNA precursor synthesis, and for the conversion of dUMP to dTMP. This is Bifunctional dihydrofolate reductase-thymidylate synthase from Leishmania amazonensis.